The primary structure comprises 647 residues: Threonine--tRNA ligase (647 aa).

The TGS domain maps to 1–61 (MIKITFPDGA…TEDGAIEIVT (61 aa)). Residues 242 to 540 (DHRKLGKELD…LIENYKGAFP (299 aa)) are catalytic. Zn(2+) contacts are provided by C336, H387, and H517.

This sequence belongs to the class-II aminoacyl-tRNA synthetase family. As to quaternary structure, homodimer. The cofactor is Zn(2+).

The protein localises to the cytoplasm. The enzyme catalyses tRNA(Thr) + L-threonine + ATP = L-threonyl-tRNA(Thr) + AMP + diphosphate + H(+). Functionally, catalyzes the attachment of threonine to tRNA(Thr) in a two-step reaction: L-threonine is first activated by ATP to form Thr-AMP and then transferred to the acceptor end of tRNA(Thr). Also edits incorrectly charged L-seryl-tRNA(Thr). The polypeptide is Threonine--tRNA ligase (Streptococcus sanguinis (strain SK36)).